The sequence spans 303 residues: MSQDAPSCFTAIISPADRVQVLAEALPYIQRFAGKTIVVKYGGAAMVKENLRDLVIRDIVFLATVGIKPVVVHGGGPEINSWLERLNIPVQFVGGLRVTDKITMEVVEMVLAGKVNKSIVQMINQAGGSAVGLCGRDGSIIEARPHQSAQLQPDIGFVGDIQSVNPKLIQSLLKEGHIPVLSSVASDENGQAYNINADTAAGELAAALDAEKLILLTDTPGILLDKDHPRSLIRKLDIYQARKLIAEGVVDGGMIPKVQCCVRALAQGVRAAHIVDGRQMHALLLEVLTDQGIGSMLVASELV.

Residues 75–76 (GG), arginine 97, and asparagine 194 contribute to the substrate site.

Belongs to the acetylglutamate kinase family. ArgB subfamily.

The protein resides in the cytoplasm. The catalysed reaction is N-acetyl-L-glutamate + ATP = N-acetyl-L-glutamyl 5-phosphate + ADP. It functions in the pathway amino-acid biosynthesis; L-arginine biosynthesis; N(2)-acetyl-L-ornithine from L-glutamate: step 2/4. Its function is as follows. Catalyzes the ATP-dependent phosphorylation of N-acetyl-L-glutamate. The chain is Acetylglutamate kinase from Gloeobacter violaceus (strain ATCC 29082 / PCC 7421).